The primary structure comprises 896 residues: Microsomal triglyceride transfer protein large subunit (896 aa).

The N-terminal stretch at 1 to 21 (MILLAVLFLCFFSSYSASVKG) is a signal peptide. The Vitellogenin domain occupies 28–659 (LNNERLYKLT…IFQYIGKAEL (632 aa)). The cysteines at positions 174 and 194 are disulfide-linked.

As to quaternary structure, heterodimer; heterodimerizes with the protein disulfide isomerase (P4HB/PDI). Interacts with APOB. Interacts with PRAP1.

The protein resides in the endoplasmic reticulum. It localises to the golgi apparatus. It catalyses the reaction a 1,2-diacyl-sn-glycero-3-phosphocholine(in) = a 1,2-diacyl-sn-glycero-3-phosphocholine(out). The catalysed reaction is a 1,2-diacyl-sn-glycero-3-phosphoethanolamine(in) = a 1,2-diacyl-sn-glycero-3-phosphoethanolamine(out). The enzyme catalyses a cholesterol ester(in) = a cholesterol ester(out). It carries out the reaction a triacyl-sn-glycerol(in) = a triacyl-sn-glycerol(out). Functionally, catalyzes the transport of triglyceride, cholesteryl ester, and phospholipid between phospholipid surfaces. Required for the assembly and secretion of plasma lipoproteins that contain apolipoprotein B. May be involved in regulating cholesteryl ester biosynthesis in cells that produce lipoproteins. The polypeptide is Microsomal triglyceride transfer protein large subunit (Mttp) (Rattus norvegicus (Rat)).